Consider the following 101-residue polypeptide: MAKLSSINKNERRKKLVEKYAAKYAALKATADDQSLDETERLIARLKMAELPRNANPTRVRNRCNTTGRPRGYYRKFGLCRIELRDLANKGLIPGVTKSSW.

The protein belongs to the universal ribosomal protein uS14 family. In terms of assembly, part of the 30S ribosomal subunit. Contacts proteins S3 and S10.

Binds 16S rRNA, required for the assembly of 30S particles and may also be responsible for determining the conformation of the 16S rRNA at the A site. This is Small ribosomal subunit protein uS14 from Novosphingobium aromaticivorans (strain ATCC 700278 / DSM 12444 / CCUG 56034 / CIP 105152 / NBRC 16084 / F199).